Here is a 262-residue protein sequence, read N- to C-terminus: MVTMRDLLECGVHFGHQTRRWNPKMKKFIFGERKGIYIIDLQKTIRYFRYTYNIVRDAAAEGKSVLFVGTKKQAIDAIKEYAEKCGMPYVNHRWLGGMMTNFGTIRQSIRKLEVIETMEEDGSINLLTKKEALMLRRKKEKLIATLGGIRNMKSLPDMIFVVDTVKEKIAVQEANRLKIPVVAPIDTNCDPDVVDYPIPGNDDAIRSVQLFCQEMAEAINEGKSLLEQDGGEQAAGEEVSQDEKDAVVAEAMSEEDFGEDEE.

Residues K223 to E262 form a disordered region. The span at E227–E238 shows a compositional bias: low complexity. The span at M252 to E262 shows a compositional bias: acidic residues.

The protein belongs to the universal ribosomal protein uS2 family.

The protein is Small ribosomal subunit protein uS2 of Campylobacter concisus (strain 13826).